We begin with the raw amino-acid sequence, 633 residues long: Chitin synthase regulatory factor 4 (633 aa).

A disordered region spans residues 121-151 (ATSSQETKRDRPLPNIRNSAPSATRSHSTPC). The segment covering 136–149 (IRNSAPSATRSHST) has biased composition (polar residues). The residue at position 148 (Ser148) is a Phosphoserine. 5 Sel1-like repeats span residues 278–314 (AKAMYFDAYVYETGAFDVESDIQRAWDLYSSSANLGY), 315–346 (TRSLYRLGVLLEDQGNLEEAVEYFEKGVSEND), 438–474 (SSAQLRMGAVYEFGKYGCPVVPRYSLFYYSAAAKRGE), 475–511 (TEADLAVAKWYLNGSDGIPVDEDLAFMHAERASMAGN), and 512–543 (ANAQFLMGYLFDTRGNTEQATYWYNEAAKAGH). The tract at residues 583–613 (ASETSPPHAPAVSSTPVTSAPPVSQTKVTKV) is disordered. The segment covering 592-613 (PAVSSTPVTSAPPVSQTKVTKV) has biased composition (low complexity).

It localises to the cytoplasm. Its function is as follows. Involved in septum formation. Required for the proper localization of chs2 at the septum. This Schizosaccharomyces pombe (strain 972 / ATCC 24843) (Fission yeast) protein is Chitin synthase regulatory factor 4 (chr4).